The sequence spans 278 residues: Large ribosomal subunit protein uL2 (278 aa).

Residues 226–278 (MNPIDHPHGGGEGKTAAGRHPVSPWGTPSKGSRTRKNKRTSNMIVRSRYSKKG) are disordered.

The protein belongs to the universal ribosomal protein uL2 family. In terms of assembly, part of the 50S ribosomal subunit. Forms a bridge to the 30S subunit in the 70S ribosome.

Functionally, one of the primary rRNA binding proteins. Required for association of the 30S and 50S subunits to form the 70S ribosome, for tRNA binding and peptide bond formation. It has been suggested to have peptidyltransferase activity; this is somewhat controversial. Makes several contacts with the 16S rRNA in the 70S ribosome. This Nitrosomonas europaea (strain ATCC 19718 / CIP 103999 / KCTC 2705 / NBRC 14298) protein is Large ribosomal subunit protein uL2.